A 508-amino-acid chain; its full sequence is ATP synthase subunit alpha (508 aa).

Residue 169–176 (GDRGTGKS) participates in ATP binding.

This sequence belongs to the ATPase alpha/beta chains family. F-type ATPases have 2 components, CF(1) - the catalytic core - and CF(0) - the membrane proton channel. CF(1) has five subunits: alpha(3), beta(3), gamma(1), delta(1), epsilon(1). CF(0) has three main subunits: a(1), b(2) and c(9-12). The alpha and beta chains form an alternating ring which encloses part of the gamma chain. CF(1) is attached to CF(0) by a central stalk formed by the gamma and epsilon chains, while a peripheral stalk is formed by the delta and b chains.

It is found in the cell membrane. It carries out the reaction ATP + H2O + 4 H(+)(in) = ADP + phosphate + 5 H(+)(out). Produces ATP from ADP in the presence of a proton gradient across the membrane. The alpha chain is a regulatory subunit. In Natranaerobius thermophilus (strain ATCC BAA-1301 / DSM 18059 / JW/NM-WN-LF), this protein is ATP synthase subunit alpha.